The chain runs to 390 residues: Protein phosphatase 1B (390 aa).

A compositionally biased stretch (basic and acidic residues) spans 1-14; the sequence is MGAFLDKPKTEKHN. Positions 1-20 are disordered; it reads MGAFLDKPKTEKHNAHGAGN. Residue Gly-2 is the site of N-myristoyl glycine attachment. Lys-12 participates in a covalent cross-link: Glycyl lysine isopeptide (Lys-Gly) (interchain with G-Cter in ISG15). The PPM-type phosphatase domain occupies 23–295; sequence RYGLSSMQGW…DNMSIVLVCF (273 aa). Positions 60, 61, 243, and 286 each coordinate Mn(2+). The disordered stretch occupies residues 371 to 390; sequence NPNKDNDGGAGDLEDSLVAL. Ser-386 carries the post-translational modification Phosphoserine.

This sequence belongs to the PP2C family. In terms of assembly, monomer. Interacts with PAK6. Interacts with the phosphorylated form of IKBKB/IKKB. It depends on Mg(2+) as a cofactor. Requires Mn(2+) as cofactor. Post-translationally, isgylation negatively regulates its activity. In terms of processing, N-myristoylation is essential for the recognition of its substrates for dephosphorylation.

It localises to the cytoplasm. The protein resides in the cytosol. Its subcellular location is the membrane. The catalysed reaction is O-phospho-L-seryl-[protein] + H2O = L-seryl-[protein] + phosphate. The enzyme catalyses O-phospho-L-threonyl-[protein] + H2O = L-threonyl-[protein] + phosphate. Its function is as follows. Enzyme with a broad specificity. Dephosphorylates PRKAA1 and PRKAA2. Inhibits TBK1-mediated antiviral signaling by dephosphorylating it at 'Ser-172'. Plays an important role in the termination of TNF-alpha-mediated NF-kappa-B activation through dephosphorylating and inactivating IKBKB/IKKB. The protein is Protein phosphatase 1B (Ppm1b) of Rattus norvegicus (Rat).